The primary structure comprises 239 residues: Ribose-5-phosphate isomerase A (239 aa).

Residues 40-43 (SGST), 96-99 (DGAD), and 110-113 (KGGG) each bind substrate. The active-site Proton acceptor is Glu-119. Lys-137 is a substrate binding site.

Belongs to the ribose 5-phosphate isomerase family. In terms of assembly, homodimer.

The enzyme catalyses aldehydo-D-ribose 5-phosphate = D-ribulose 5-phosphate. The protein operates within carbohydrate degradation; pentose phosphate pathway; D-ribose 5-phosphate from D-ribulose 5-phosphate (non-oxidative stage): step 1/1. In terms of biological role, catalyzes the reversible conversion of ribose-5-phosphate to ribulose 5-phosphate. This is Ribose-5-phosphate isomerase A from Methanococcus maripaludis (strain C6 / ATCC BAA-1332).